The sequence spans 232 residues: uncharacterized protein (232 aa).

Residues 119–145 (DEEYRENSKAPEAKARPSFVGEGRRLG) form a disordered region. Basic and acidic residues predominate over residues 123-133 (RENSKAPEAKA).

This is an uncharacterized protein from Encephalitozoon cuniculi (strain GB-M1) (Microsporidian parasite).